A 281-amino-acid polypeptide reads, in one-letter code: Ribosomal RNA small subunit methyltransferase A (281 aa).

S-adenosyl-L-methionine-binding residues include Asn-21, Leu-23, Gly-48, Glu-69, Asp-92, and Asn-113.

Belongs to the class I-like SAM-binding methyltransferase superfamily. rRNA adenine N(6)-methyltransferase family. RsmA subfamily.

It localises to the cytoplasm. The catalysed reaction is adenosine(1518)/adenosine(1519) in 16S rRNA + 4 S-adenosyl-L-methionine = N(6)-dimethyladenosine(1518)/N(6)-dimethyladenosine(1519) in 16S rRNA + 4 S-adenosyl-L-homocysteine + 4 H(+). Functionally, specifically dimethylates two adjacent adenosines (A1518 and A1519) in the loop of a conserved hairpin near the 3'-end of 16S rRNA in the 30S particle. May play a critical role in biogenesis of 30S subunits. This Ralstonia nicotianae (strain ATCC BAA-1114 / GMI1000) (Ralstonia solanacearum) protein is Ribosomal RNA small subunit methyltransferase A.